A 212-amino-acid polypeptide reads, in one-letter code: MEIERINDSTVKFFITYKDIESRGFDRDEIWYNRERGEELFFEMMNEANDREDFELEGPLWIQVHALEKGLEIVVTRGQISDGNVKLEIPVTQEDGDGQGQESSMMTEDDFLEESLEIVIGFADFEDIVDLSHNFFIDDINNTLVHFEGTYYLHVVFNDETYSEDEQDDMLSQMLEYGYESDLSIYRIMEYGKVIIDSNALTVVREQFPKRA.

It belongs to the MecA family. As to quaternary structure, homodimer.

Enables the recognition and targeting of unfolded and aggregated proteins to the ClpC protease or to other proteins involved in proteolysis. Acts negatively in the development of competence by binding ComK and recruiting it to the ClpCP protease. When overexpressed, inhibits sporulation. Also involved in Spx degradation by ClpC. The polypeptide is Adapter protein MecA 2 (mecA2) (Halalkalibacterium halodurans (strain ATCC BAA-125 / DSM 18197 / FERM 7344 / JCM 9153 / C-125) (Bacillus halodurans)).